A 360-amino-acid chain; its full sequence is Pyrimidine monooxygenase RutA (360 aa).

FMN-binding positions include 49–50, asparagine 115, glutamate 124, 140–141, and serine 190; these read IK and RY.

Belongs to the NtaA/SnaA/DszA monooxygenase family. RutA subfamily.

The catalysed reaction is uracil + FMNH2 + NADH + O2 = (Z)-3-ureidoacrylate + FMN + NAD(+) + H2O + H(+). It carries out the reaction thymine + FMNH2 + NADH + O2 = (Z)-2-methylureidoacrylate + FMN + NAD(+) + H2O + H(+). In terms of biological role, catalyzes the pyrimidine ring opening between N-3 and C-4 by an unusual flavin hydroperoxide-catalyzed mechanism, adding oxygen atoms in the process to yield ureidoacrylate peracid, that immediately reacts with FMN forming ureidoacrylate and FMN-N(5)-oxide. The FMN-N(5)-oxide reacts spontaneously with NADH to produce FMN. Requires the flavin reductase RutF to regenerate FMN in vivo. The chain is Pyrimidine monooxygenase RutA from Pseudomonas syringae pv. syringae (strain B728a).